The following is a 204-amino-acid chain: ATP phosphoribosyltransferase (204 aa).

The protein belongs to the ATP phosphoribosyltransferase family. Short subfamily. In terms of assembly, heteromultimer composed of HisG and HisZ subunits.

Its subcellular location is the cytoplasm. The catalysed reaction is 1-(5-phospho-beta-D-ribosyl)-ATP + diphosphate = 5-phospho-alpha-D-ribose 1-diphosphate + ATP. Its pathway is amino-acid biosynthesis; L-histidine biosynthesis; L-histidine from 5-phospho-alpha-D-ribose 1-diphosphate: step 1/9. Functionally, catalyzes the condensation of ATP and 5-phosphoribose 1-diphosphate to form N'-(5'-phosphoribosyl)-ATP (PR-ATP). Has a crucial role in the pathway because the rate of histidine biosynthesis seems to be controlled primarily by regulation of HisG enzymatic activity. The polypeptide is ATP phosphoribosyltransferase (Staphylococcus epidermidis (strain ATCC 35984 / DSM 28319 / BCRC 17069 / CCUG 31568 / BM 3577 / RP62A)).